The sequence spans 266 residues: Uracil-DNA glycosylase (266 aa).

Positions 1–25 (MTRRADPAQATLFDDDEPAGAPTAT) are disordered. Asp-97 acts as the Proton acceptor in catalysis.

Belongs to the uracil-DNA glycosylase (UDG) superfamily. UNG family.

It is found in the cytoplasm. It catalyses the reaction Hydrolyzes single-stranded DNA or mismatched double-stranded DNA and polynucleotides, releasing free uracil.. Its function is as follows. Excises uracil residues from the DNA which can arise as a result of misincorporation of dUMP residues by DNA polymerase or due to deamination of cytosine. The chain is Uracil-DNA glycosylase from Ralstonia nicotianae (strain ATCC BAA-1114 / GMI1000) (Ralstonia solanacearum).